The chain runs to 460 residues: GTPase Der (460 aa).

2 EngA-type G domains span residues 4–174 (PQVA…PRRE) and 184–361 (PKIA…AERS). GTP contacts are provided by residues 10–17 (GRPNVGKS), 57–61 (DTGGL), 126–129 (NKAE), 190–197 (GRPNVGKS), 237–241 (DTAGI), and 302–305 (NKWD). Positions 362–446 (RRIPTAELNQ…PIELVFRERE (85 aa)) constitute a KH-like domain.

Belongs to the TRAFAC class TrmE-Era-EngA-EngB-Septin-like GTPase superfamily. EngA (Der) GTPase family. Associates with the 50S ribosomal subunit.

Functionally, GTPase that plays an essential role in the late steps of ribosome biogenesis. In Thermomicrobium roseum (strain ATCC 27502 / DSM 5159 / P-2), this protein is GTPase Der.